The following is a 341-amino-acid chain: Heat-inducible transcription repressor HrcA (341 aa).

It belongs to the HrcA family.

In terms of biological role, negative regulator of class I heat shock genes (grpE-dnaK-dnaJ and groELS operons). Prevents heat-shock induction of these operons. The chain is Heat-inducible transcription repressor HrcA from Carboxydothermus hydrogenoformans (strain ATCC BAA-161 / DSM 6008 / Z-2901).